Consider the following 652-residue polypeptide: DNA ligase (652 aa).

NAD(+) contacts are provided by residues 29–33 (DSDYD), 78–79 (SL), and E107. The active-site N6-AMP-lysine intermediate is the K109. The NAD(+) site is built by R130, E164, K278, and K302. Zn(2+) contacts are provided by C395, C398, C413, and C418. Residues 577–652 (NSDAALFGLT…IEDEDWLRKL (76 aa)) enclose the BRCT domain.

This sequence belongs to the NAD-dependent DNA ligase family. LigA subfamily. Requires Mg(2+) as cofactor. The cofactor is Mn(2+).

It catalyses the reaction NAD(+) + (deoxyribonucleotide)n-3'-hydroxyl + 5'-phospho-(deoxyribonucleotide)m = (deoxyribonucleotide)n+m + AMP + beta-nicotinamide D-nucleotide.. Its function is as follows. DNA ligase that catalyzes the formation of phosphodiester linkages between 5'-phosphoryl and 3'-hydroxyl groups in double-stranded DNA using NAD as a coenzyme and as the energy source for the reaction. It is essential for DNA replication and repair of damaged DNA. The protein is DNA ligase of Streptococcus pyogenes serotype M18 (strain MGAS8232).